The chain runs to 172 residues: Large ribosomal subunit protein eL20A (172 aa).

Position 32 is a phosphoserine (Ser32). Residues Lys125, Lys131, and Lys149 each participate in a glycyl lysine isopeptide (Lys-Gly) (interchain with G-Cter in ubiquitin) cross-link.

The protein belongs to the eukaryotic ribosomal protein eL20 family. In terms of assembly, component of the large ribosomal subunit (LSU). Mature yeast ribosomes consist of a small (40S) and a large (60S) subunit. The 40S small subunit contains 1 molecule of ribosomal RNA (18S rRNA) and 33 different proteins (encoded by 57 genes). The large 60S subunit contains 3 rRNA molecules (25S, 5.8S and 5S rRNA) and 46 different proteins (encoded by 81 genes). eL20 forms multiple interactions with RNA and proteins in the central protuberance, connecting components of core functional centers that are located far apart.

The protein resides in the cytoplasm. Functionally, component of the ribosome, a large ribonucleoprotein complex responsible for the synthesis of proteins in the cell. The small ribosomal subunit (SSU) binds messenger RNAs (mRNAs) and translates the encoded message by selecting cognate aminoacyl-transfer RNA (tRNA) molecules. The large subunit (LSU) contains the ribosomal catalytic site termed the peptidyl transferase center (PTC), which catalyzes the formation of peptide bonds, thereby polymerizing the amino acids delivered by tRNAs into a polypeptide chain. The nascent polypeptides leave the ribosome through a tunnel in the LSU and interact with protein factors that function in enzymatic processing, targeting, and the membrane insertion of nascent chains at the exit of the ribosomal tunnel. This is Large ribosomal subunit protein eL20A from Saccharomyces cerevisiae (strain ATCC 204508 / S288c) (Baker's yeast).